The sequence spans 257 residues: Probable enoyl-CoA hydratase echA17 (257 aa).

The protein belongs to the enoyl-CoA hydratase/isomerase family.

The catalysed reaction is a (3S)-3-hydroxyacyl-CoA = a (2E)-enoyl-CoA + H2O. The enzyme catalyses a 4-saturated-(3S)-3-hydroxyacyl-CoA = a (3E)-enoyl-CoA + H2O. Its function is as follows. Could possibly oxidize fatty acids using specific components. The polypeptide is Probable enoyl-CoA hydratase echA17 (echA17) (Mycobacterium avium (strain 104)).